A 218-amino-acid polypeptide reads, in one-letter code: Adenylate kinase (218 aa).

Position 10–15 (10–15) interacts with ATP; that stretch reads GAGKGT. The interval 30 to 59 is NMP; sequence STGDMLRAAVKAGSEMGLKAKAVMDAGQLV. AMP contacts are provided by residues Thr31, Arg36, 57–59, 85–88, and Gln92; these read QLV and GFPR. An LID region spans residues 122–159; that stretch reads GRRVHEASGRTYHLVYNPPKVEGKDDVTGEDLVQRADD. ATP contacts are provided by residues Arg123 and 132–133; that span reads TY. Arg156 and Arg167 together coordinate AMP. Gly203 serves as a coordination point for ATP.

This sequence belongs to the adenylate kinase family. Monomer.

The protein localises to the cytoplasm. It catalyses the reaction AMP + ATP = 2 ADP. The protein operates within purine metabolism; AMP biosynthesis via salvage pathway; AMP from ADP: step 1/1. In terms of biological role, catalyzes the reversible transfer of the terminal phosphate group between ATP and AMP. Plays an important role in cellular energy homeostasis and in adenine nucleotide metabolism. This chain is Adenylate kinase, found in Marinomonas sp. (strain MWYL1).